Reading from the N-terminus, the 121-residue chain is Large ribosomal subunit protein uL14c (121 aa).

This sequence belongs to the universal ribosomal protein uL14 family. Part of the 50S ribosomal subunit.

It localises to the plastid. It is found in the chloroplast. Binds to 23S rRNA. The protein is Large ribosomal subunit protein uL14c of Guillardia theta (Cryptophyte).